Consider the following 386-residue polypeptide: Galactokinase (386 aa).

Residue 32-35 (EHTD) coordinates substrate. ATP contacts are provided by residues serine 66 and 123–129 (GASLSSS). Serine 129 and glutamate 161 together coordinate Mg(2+). Aspartate 173 functions as the Proton acceptor in the catalytic mechanism. Tyrosine 223 contributes to the substrate binding site.

It belongs to the GHMP kinase family. GalK subfamily.

It localises to the cytoplasm. It carries out the reaction alpha-D-galactose + ATP = alpha-D-galactose 1-phosphate + ADP + H(+). Its pathway is carbohydrate metabolism; galactose metabolism. Its function is as follows. Catalyzes the transfer of the gamma-phosphate of ATP to D-galactose to form alpha-D-galactose-1-phosphate (Gal-1-P). This is Galactokinase from Staphylococcus saprophyticus subsp. saprophyticus (strain ATCC 15305 / DSM 20229 / NCIMB 8711 / NCTC 7292 / S-41).